A 935-amino-acid chain; its full sequence is Potassium channel AKT1 (935 aa).

Residues 1–106 (MARWGAARMA…YDRRYRIWET (106 aa)) are Cytoplasmic-facing. The chain crosses the membrane as a helical span at residues 107–127 (FLIVLVVYSAWVSPFEFGFIP). Topologically, residues 128–136 (KPTGALATA) are extracellular. The helical transmembrane segment at 137–157 (DNVVNAFFAVDIILTFFVAYL) threads the bilayer. Residues 158–178 (DKMSYMLEDDPKKIAWRYSTT) lie on the Cytoplasmic side of the membrane. Residues 179–199 (WLVLDVASTIPSEFARRILPS) form a helical membrane-spanning segment. The Extracellular portion of the chain corresponds to 200–205 (KLRSYG). Residues 206 to 226 (FFNMLRLWRLRRVSSLFSRLE) form a helical; Voltage-sensor membrane-spanning segment. Residues 227-240 (KDRHFNYFWVRCAK) lie on the Cytoplasmic side of the membrane. Residues 241–261 (LICVTLFAVHCAACFYYLLAD) form a helical membrane-spanning segment. At 262–288 (RYPVPTSTWIGNYMADFHERSLWIRYV) the chain is on the extracellular side. The pore-forming intramembrane region spans 289 to 308 (TSVYWSITTLTTVGYGDLHA). The Extracellular portion of the chain corresponds to 309 to 312 (ENTR). The helical transmembrane segment at 313–333 (EMIFNIFYMLFNLGLTAYLIG) threads the bilayer. At 334–935 (NMTNLVVHGT…WDAEKMKGKS (602 aa)) the chain is on the cytoplasmic side. 419–538 (LFQGVSNDLI…TIIMNNLIQF (120 aa)) contributes to the a nucleoside 3',5'-cyclic phosphate binding site. ANK repeat units lie at residues 565–594 (DLPI…DPNE), 598–627 (DGHT…DPNA), 631–660 (EGKV…DLSS), 662–691 (DTGL…DVNR), 695–724 (DGTT…DIDK), and 728–757 (NGWT…ATAS). A disordered region spans residues 826 to 854 (SQAQRETDHPLSRGGLAATGSPNPSSGSR). Polar residues predominate over residues 845–854 (GSPNPSSGSR). The KHA domain maps to 859–935 (RVTISCPEKG…WDAEKMKGKS (77 aa)).

The protein belongs to the potassium channel family. Plant (TC 1.A.1.4) subfamily. In terms of assembly, the potassium channel is probably a homo- or heterotetrameric complex of pore-forming subunits. In terms of tissue distribution, highly expressed in the epidermis and endodermis of roots, and at lower level in cells of the vasculature and the cortex. Expressed in xylem parenchyma, phloem and mesophyll cells of leaves.

It localises to the membrane. Its function is as follows. Highly selective inward-rectifying potassium channel that mediates potassium uptake by plant roots. In Oryza sativa subsp. indica (Rice), this protein is Potassium channel AKT1 (AKT1).